The following is an 832-amino-acid chain: WD repeat-containing protein 75 (832 aa).

13 WD repeats span residues 4-43 (QCQI…KVYS), 47-86 (EECI…KLWD), 90-131 (GILI…QLVS), 145-184 (KEIS…YYFK), 193-230 (LKAT…RLWR), 236-275 (KEYT…VQWP), 278-317 (SEEK…SIID), 323-361 (SGII…QFYS), 375-424 (QQEF…KLWE), 431-477 (SFVL…KVWM), 490-528 (SWLC…TVWE), 532-572 (WDLK…CCWN), and 577-614 (ALEW…FLFQ). The segment at 764–798 (SQSTEESKEDEEMKSEHSEADSSDETEEMESQKRF) is disordered.

Component of the proposed t-UTP subcomplex of the ribosomal small subunit (SSU) processome. SSU processome is composed of more than 70 proteins and the RNA chaperone small nucleolar RNA (snoRNA) U3.

It is found in the nucleus. It localises to the nucleolus. Ribosome biogenesis factor. Part of the small subunit (SSU) processome, first precursor of the small eukaryotic ribosomal subunit. During the assembly of the SSU processome in the nucleolus, many ribosome biogenesis factors, an RNA chaperone and ribosomal proteins associate with the nascent pre-rRNA and work in concert to generate RNA folding, modifications, rearrangements and cleavage as well as targeted degradation of pre-ribosomal RNA by the RNA exosome. Involved in nucleolar processing of pre-18S ribosomal RNA. Required for optimal pre-ribosomal RNA transcription by RNA polymerase I. In Xenopus laevis (African clawed frog), this protein is WD repeat-containing protein 75 (wdr75).